A 1338-amino-acid polypeptide reads, in one-letter code: Thioester-containing protein 1 allele R1 (1338 aa).

An N-terminal signal peptide occupies residues 1–21; that stretch reads MWQFIRSRILTVIIFIGAAHG. Residues Asn-68, Asn-199, Asn-242, Asn-312, and Asn-481 are each glycosylated (N-linked (GlcNAc...) asparagine). A may contain the cleavage site region spans residues 580-609; the sequence is ENEFDIFHSLGLFARTLDDILFDSANEKTG. Asn-637, Asn-728, and Asn-813 each carry an N-linked (GlcNAc...) asparagine glycan. Residues 859-862 constitute a cross-link (isoglutamyl cysteine thioester (Cys-Gln)); the sequence is CGEQ. N-linked (GlcNAc...) asparagine glycosylation is found at Asn-919 and Asn-1065. Cystine bridges form between Cys-1217/Cys-1283, Cys-1326/Cys-1338, and Cys-1329/Cys-1334.

Heterodimer of a TEP1-N chain and an TEP1-C chain non-covalently linked. Forms a complex composed of TEP1-N and TEP1-C heterodimer, LRIM1 and APL1C; the interaction stabilizes TEP1-N and TEP1-C heterodimer, prevents its binding to tissues while circulating in the hemolymph and protects the thioester bond from hydrolysis. Mature TEP1 and to a lesser extent full-length TEP1 interact with SPCLIP1; the interaction is induced by microbial infection. In the hemolymph, the full-length protein is cleaved by an unknow protease into a 75kDa N-terminal (TEP1-N) chain and an 80kDa C-terminal (TEP1-C) chain which remain non-covalently linked. The TEP1-C chain contains the thioester bond which covalently binds to the pathogen surface. Cleavage is induced by bacterial infection or aseptic wound injury. During embryonic and pupal development, the cleaved form is the predominant form. Post-translationally, N-glycosylated.

It is found in the secreted. In terms of biological role, plays an essential role in the innate immune response against bacteria, fungi and protozoa infection. After proteolytic cleavage, the protein C-terminus binds covalently through a thioester bond to the pathogen surface resulting in pathogen clearance either by melanization or lysis. Initiate the recruitment and activation of a cascade of proteases, mostly of CLIP-domain serine proteases, which leads to the proteolytic cleavage of the prophenoloxidase (PPO) into active phenoloxidase (PO), the rate-limiting enzyme in melanin biosynthesis. In response to parasite P.berghei-mediated infection, binds to and mediates killing of ookinetes, as they egress from midgut epithelial cells into the basal labyrinth, by both lysis and melanization. During bacterial infection, binds to both Gram-positive and Gram-negative bacteria but only promotes phagocytosis of Gram-negative bacteria. Promotes the accumulation of SPCLIP1 onto the surface of P.berghei ookinetes and bacterium E.coli which leads to the melanization of the pathogen. Recruits CLIPA2 to bacteria surface. In response to bacterial infection, required for periostial hemocyte aggregation, but not for the aggregation of sessile hemocytes in non-periostial regions. During the late stage of fungus B.bassiana-mediated infection, required for the initiation of hyphae melanization by binding to the surface of hyphae and recruiting prophenoloxidase PPO to them. Plays a role in male fertility by binding to defective sperm cells and promoting their removal during spermatogenesis. Binds to and mediates killing of parasite P.bergei ookinetes by lysis and melanization. Functionally, binds covalently through a thioester bond to the pathogen surface resulting in pathogen clearance. This Anopheles gambiae (African malaria mosquito) protein is Thioester-containing protein 1 allele R1.